We begin with the raw amino-acid sequence, 394 residues long: Mannosyl-3-phosphoglycerate synthase (394 aa).

Belongs to the glycosyltransferase 2 family.

The protein localises to the cytoplasm. It catalyses the reaction (2R)-3-phosphoglycerate + GDP-alpha-D-mannose = 2-O-(alpha-D-mannosyl)-3-phosphoglycerate + GDP + H(+). It functions in the pathway carbohydrate biosynthesis; 2-(alpha-D-mannosyl)-D-glycerate biosynthesis; 2-(alpha-D-mannosyl)-D-glycerate from GDP-alpha-D-mannose (MPG route): step 1/2. Functionally, transfers a mannosyl group from GDP-mannose to phosphoglycerate to form mannosyl-3-phosphoglycerate (MPG). This is Mannosyl-3-phosphoglycerate synthase (mngA) from Pyrococcus abyssi (strain GE5 / Orsay).